The primary structure comprises 24 residues: Humanin-like 7 (24 aa).

The protein belongs to the humanin family. In terms of tissue distribution, expressed in testis.

The protein localises to the secreted. The protein resides in the cytoplasm. In terms of biological role, plays a role as a neuroprotective and antiapoptotic factor. This Homo sapiens (Human) protein is Humanin-like 7.